A 484-amino-acid polypeptide reads, in one-letter code: Glycogen synthase (484 aa).

Residue lysine 15 coordinates ADP-alpha-D-glucose.

The protein belongs to the glycosyltransferase 1 family. Bacterial/plant glycogen synthase subfamily.

It catalyses the reaction [(1-&gt;4)-alpha-D-glucosyl](n) + ADP-alpha-D-glucose = [(1-&gt;4)-alpha-D-glucosyl](n+1) + ADP + H(+). The protein operates within glycan biosynthesis; glycogen biosynthesis. Synthesizes alpha-1,4-glucan chains using ADP-glucose. The polypeptide is Glycogen synthase (Koribacter versatilis (strain Ellin345)).